A 443-amino-acid polypeptide reads, in one-letter code: Adenylosuccinate synthetase (443 aa).

GTP-binding positions include 12–18 (GDEGKGK) and 40–42 (GHT). Aspartate 13 (proton acceptor) is an active-site residue. Mg(2+) contacts are provided by aspartate 13 and glycine 40. Residues 13–16 (DEGK), 38–41 (NAGH), threonine 128, arginine 142, glutamine 223, threonine 238, and arginine 302 each bind IMP. Histidine 41 functions as the Proton donor in the catalytic mechanism. Residue 298 to 304 (TTTGRRR) coordinates substrate. GTP contacts are provided by residues arginine 304, 330-332 (KLD), and 412-414 (SLG).

It belongs to the adenylosuccinate synthetase family. As to quaternary structure, homodimer. The cofactor is Mg(2+).

It is found in the cytoplasm. The enzyme catalyses IMP + L-aspartate + GTP = N(6)-(1,2-dicarboxyethyl)-AMP + GDP + phosphate + 2 H(+). The protein operates within purine metabolism; AMP biosynthesis via de novo pathway; AMP from IMP: step 1/2. Its function is as follows. Plays an important role in the de novo pathway of purine nucleotide biosynthesis. Catalyzes the first committed step in the biosynthesis of AMP from IMP. This is Adenylosuccinate synthetase from Picosynechococcus sp. (strain ATCC 27264 / PCC 7002 / PR-6) (Agmenellum quadruplicatum).